Consider the following 605-residue polypeptide: Protein spinster (605 aa).

Residues 1 to 94 (MSLKHQKQSY…HPLGEHHHIP (94 aa)) form a disordered region. The span at 27–38 (SSGSSGSSSSEE) shows a compositional bias: low complexity. A compositionally biased stretch (polar residues) spans 55 to 67 (TTYSSQQLMPSDT). Residues 76 to 85 (RLRPHHHHHH) show a composition bias toward basic residues. Residues 115 to 137 (FTVTVLCFVNLINYMDRFTIAGV) traverse the membrane as a helical segment. A glycan (N-linked (GlcNAc...) asparagine) is linked at Asn-149. 5 helical membrane-spanning segments follow: residues 153–173 (GLLQ…FGYL), 180–200 (PWIM…GSFM), 203–223 (FGWF…YSTI), 240–260 (MLAL…IVGS), and 271–291 (WALR…LLIK). The N-linked (GlcNAc...) asparagine glycan is linked to Asn-319. 5 consecutive transmembrane segments (helical) span residues 329–349 (FTCV…FIYL), 367–387 (FNFG…GSFL), 401–421 (VICA…CLLV), 431–451 (LIFF…DILL), and 465–485 (FQIL…VGAI). An N-linked (GlcNAc...) asparagine glycan is attached at Asn-519. The chain crosses the membrane as a helical span at residues 558–578 (STSFVEVLGGIFFIFTACFII). An N-linked (GlcNAc...) asparagine glycan is attached at Asn-583.

It belongs to the major facilitator superfamily. Spinster (TC 2.A.1.49) family. In terms of tissue distribution, enriched in brain (at protein level).

Its subcellular location is the late endosome membrane. It localises to the lysosome membrane. Its function is as follows. Probable sphingolipid transporter that plays a central role in endosomes and/or lysosomes storage. Involved in TGF-beta-mediated synaptic growth regulation both pre- and postsynaptically via its function in endosomal storage regulation. Also required during oogenesis by regulating yolk spheres storage. The chain is Protein spinster (spin) from Drosophila melanogaster (Fruit fly).